Consider the following 213-residue polypeptide: Holliday junction branch migration complex subunit RuvA (213 aa).

The domain I stretch occupies residues 1–64 (MIASVTGEVA…DEAPLLFGFA (64 aa)). Residues 65-143 (QGDEKEIFTV…LPEPPVQQAN (79 aa)) are domain II. Residues 144-152 (QPQVPVWRD) are flexible linker. The interval 152–213 (DQVVDALTGL…GTTHAPTGRR (62 aa)) is domain III.

It belongs to the RuvA family. In terms of assembly, homotetramer. Forms an RuvA(8)-RuvB(12)-Holliday junction (HJ) complex. HJ DNA is sandwiched between 2 RuvA tetramers; dsDNA enters through RuvA and exits via RuvB. An RuvB hexamer assembles on each DNA strand where it exits the tetramer. Each RuvB hexamer is contacted by two RuvA subunits (via domain III) on 2 adjacent RuvB subunits; this complex drives branch migration. In the full resolvosome a probable DNA-RuvA(4)-RuvB(12)-RuvC(2) complex forms which resolves the HJ.

The protein localises to the cytoplasm. The RuvA-RuvB-RuvC complex processes Holliday junction (HJ) DNA during genetic recombination and DNA repair, while the RuvA-RuvB complex plays an important role in the rescue of blocked DNA replication forks via replication fork reversal (RFR). RuvA specifically binds to HJ cruciform DNA, conferring on it an open structure. The RuvB hexamer acts as an ATP-dependent pump, pulling dsDNA into and through the RuvAB complex. HJ branch migration allows RuvC to scan DNA until it finds its consensus sequence, where it cleaves and resolves the cruciform DNA. This chain is Holliday junction branch migration complex subunit RuvA, found in Kocuria rhizophila (strain ATCC 9341 / DSM 348 / NBRC 103217 / DC2201).